We begin with the raw amino-acid sequence, 488 residues long: Annexin A7 (488 aa).

Residues 1-18 show a composition bias toward pro residues; that stretch reads MSYPGYPPTGYPPFPGYP. 2 disordered regions span residues 1-49 and 71-143; these read MSYP…YPQV and GYPG…PTYP. The tract at residues 1–143 is repeat-rich region; the sequence is MSYPGYPPTG…QYPGGQPTYP (143 aa). The interval 5-20 is 3 X 5 AA tandem repeats of G-Y-P-P-X; sequence GYPPTGYPPFPGYPPA. Gly residues predominate over residues 89-102; that stretch reads PGQGFGVPPGGAGF. Annexin repeat units follow at residues 185–256, 257–328, 340–412, and 416–487; these read FDAI…ALFM, PPTY…SMCQ, QMAQ…TILQ, and NRPA…AIVG. K233 carries the post-translational modification N6-acetyllysine.

The protein belongs to the annexin family. Interacts with PDCD6. As to expression, isoform 1 is expressed in brain, heart and skeletal muscle. Isoform 2 is more abundant in liver, lung, kidney, spleen, fibroblasts and placenta.

Its function is as follows. Calcium/phospholipid-binding protein which promotes membrane fusion and is involved in exocytosis. The protein is Annexin A7 (ANXA7) of Homo sapiens (Human).